A 1050-amino-acid chain; its full sequence is Self-sufficient cytochrome P450 monooxygenase CYP505E3 (1050 aa).

Residue Cys406 participates in heme binding. Residues 459–481 (RGQSATGLSQGSMSASGATSSVA) are compositionally biased toward polar residues. The interval 459-495 (RGQSATGLSQGSMSASGATSSVASPGPPAATGAQSNP) is disordered. A Flavodoxin-like domain is found at 501–641 (ISFFYGSNSG…DLELWEETNL (141 aa)). FMN is bound by residues 507–511 (SNSGT) and 585–617 (VFGC…TRLT). The FAD-binding FR-type domain maps to 679–907 (RGLVEAKVTA…RPAKDAFHLP (229 aa)).

This sequence in the N-terminal section; belongs to the cytochrome P450 family. The cofactor is FAD. Requires FMN as cofactor. Heme is required as a cofactor.

It carries out the reaction 2 oxidized [cytochrome P450] + NADPH = 2 reduced [cytochrome P450] + NADP(+) + H(+). The catalysed reaction is an organic molecule + reduced [NADPH--hemoprotein reductase] + O2 = an alcohol + oxidized [NADPH--hemoprotein reductase] + H2O + H(+). It catalyses the reaction decane + reduced [NADPH--hemoprotein reductase] + O2 = 3-decanol + oxidized [NADPH--hemoprotein reductase] + H2O + H(+). The enzyme catalyses dodecane + reduced [NADPH--hemoprotein reductase] + O2 = 5-dodecanol + oxidized [NADPH--hemoprotein reductase] + H2O + H(+). It carries out the reaction tetradecane + reduced [NADPH--hemoprotein reductase] + O2 = 7-tetradecanol + oxidized [NADPH--hemoprotein reductase] + H2O + H(+). The catalysed reaction is hexadecane + reduced [NADPH--hemoprotein reductase] + O2 = 9-hexadecanol + oxidized [NADPH--hemoprotein reductase] + H2O + H(+). It catalyses the reaction dodecanoate + reduced [NADPH--hemoprotein reductase] + O2 = 5-hydroxydodecanoate + oxidized [NADPH--hemoprotein reductase] + H2O + H(+). The enzyme catalyses tetradecanoate + reduced [NADPH--hemoprotein reductase] + O2 = 7-hydroxytetradecanoate + oxidized [NADPH--hemoprotein reductase] + H2O + H(+). It carries out the reaction hexadecanoate + reduced [NADPH--hemoprotein reductase] + O2 = 9-hydroxyhexadecanoate + oxidized [NADPH--hemoprotein reductase] + H2O + H(+). The catalysed reaction is decan-1-ol + reduced [NADPH--hemoprotein reductase] + O2 = 1,3-decanediol + oxidized [NADPH--hemoprotein reductase] + H2O + H(+). It catalyses the reaction decan-1-ol + reduced [NADPH--hemoprotein reductase] + O2 = 1,7-decanediol + oxidized [NADPH--hemoprotein reductase] + H2O + H(+). The enzyme catalyses dodecan-1-ol + reduced [NADPH--hemoprotein reductase] + O2 = 1,5-dodecanediol + oxidized [NADPH--hemoprotein reductase] + H2O + H(+). It carries out the reaction dodecan-1-ol + reduced [NADPH--hemoprotein reductase] + O2 = 1,4-dodecanediol + oxidized [NADPH--hemoprotein reductase] + H2O + H(+). The catalysed reaction is dodecan-1-ol + reduced [NADPH--hemoprotein reductase] + O2 = 1,6-dodecanediol + oxidized [NADPH--hemoprotein reductase] + H2O + H(+). Its function is as follows. Self-sufficient cytochrome P450 monooxygenase that catalyzes the regioselective in-chain hydroxylation of alkanes, fatty alcohols, and fatty acids at the omega-7 position. Performs hydroxylation of C10-C16 n-alkanes and C12 and C14 fatty alcohols; and thereby enables the one step biocatalytic synthesis of rare alcohols such as 5-dodecanol and 7-tetradecanol. Converts 1-dodecanol into 1,5-dodecanediol as major product with very little sub-terminally hydroxylated products with the 1,4-dodecanediol and 1,6-dodecanediol more abundant. Does not use hexadecanediol nor decanoic acid as substrates. Converts dodecanoic acid to 5-hydroxydodecanoic acid which can be further converted into delta-dodecalactone by lactonization of the 5-hydroxy acid at low pH. Also gives sub-terminal hydroxylation of dodecanoic acid with 9-hydroxydodecanoic acid being the second most abundant product. The C14 and C16 fatty acids are double hydroxylated to yield dihydroxy acids hydroxylated at both the omega-7 position and a sub-terminal position (omega-1, omega-2, or omega-3). The sequence is that of Self-sufficient cytochrome P450 monooxygenase CYP505E3 from Aspergillus terreus (strain NIH 2624 / FGSC A1156).